We begin with the raw amino-acid sequence, 179 residues long: Translation initiation factor IF-3 (179 aa).

Belongs to the IF-3 family. In terms of assembly, monomer.

It is found in the cytoplasm. Its function is as follows. IF-3 binds to the 30S ribosomal subunit and shifts the equilibrium between 70S ribosomes and their 50S and 30S subunits in favor of the free subunits, thus enhancing the availability of 30S subunits on which protein synthesis initiation begins. This is Translation initiation factor IF-3 from Buchnera aphidicola subsp. Schizaphis graminum (strain Sg).